The sequence spans 364 residues: Serine/threonine-protein kinase ENV7 (364 aa).

Residues Cys13, Cys14, and Cys15 are each lipidated (S-palmitoyl cysteine). The region spanning 30 to 364 is the Protein kinase domain; that stretch reads YRIQRLLGEG…LLNLLQDLDT (335 aa). ATP-binding positions include 36–44 and Lys69; that span reads LGEGGMSFV. Residue Asp215 is the Proton acceptor of the active site.

It belongs to the protein kinase superfamily. Ser/Thr protein kinase family.

It is found in the vacuole membrane. It catalyses the reaction L-seryl-[protein] + ATP = O-phospho-L-seryl-[protein] + ADP + H(+). The enzyme catalyses L-threonyl-[protein] + ATP = O-phospho-L-threonyl-[protein] + ADP + H(+). Serine/threonine-protein kinase involved in vacuolar processing and morphology. The sequence is that of Serine/threonine-protein kinase ENV7 (ENV7) from Saccharomyces cerevisiae (strain ATCC 204508 / S288c) (Baker's yeast).